The primary structure comprises 679 residues: MSEKINTKPFILHSDFRPSGDQPQAIEKLAENLTDGLAHQTLLGVTGSGKTFTIANVIAQLNRPAMLLAPNKTLAAQLYAEMKAFFPENAVEYFVSYYDYYQPEAYVPSSDTFIEKDASINDQIEQMRLSATKSFLERRDTIVVASVSAIYGLGDPDSYLQMMLHLQQGAIIDQRQILAKLAELQYTRNDQAFQRGTFRVRGEIIDIFPAESDDRAVRIELFDDEIERLSLFDPLTGSSFGAVPRFTIYPKTHYVTPRERILDAIENIKKELVSRREYFIKEHKLLEEQRISQRTQFDIEMMNELGYCSGIENYSRYLSGRNEGEPPPTLFDYMPPDAILIIDESHVTVPQIGGMYRGDRSRKETLVEYGFRLPSALDNRPLRFEEFERLAPQTIYVSATPGAYELEKSGSEIIDQVVRPTGLLDPLIEIRPVSIQVDDLLSEARQRADKNERVLVTTLTKKMAEDLTDYLDEHGIRVRYLHSDIDTVERVEIIRDLRLGEFDVLVGINLLREGLDIPEVSLVAILDADKEGFLRSERSLIQTIGRAARNLNGKAILYADSITKSMEKAITETNRRREKQTKYNEEHGIVPQALNKKVGELLDIGQGANQKAKANKQRGKMAAEPTALYNAPKNAKEYQQQIKKLEQQMYKFAQDLEFEKAAAIRDQLHQLREQFVFDN.

Residues 31–414 (ENLTDGLAHQ…ELEKSGSEII (384 aa)) form the Helicase ATP-binding domain. 44-51 (GVTGSGKT) lines the ATP pocket. A Beta-hairpin motif is present at residues 97 to 120 (YYDYYQPEAYVPSSDTFIEKDASI). The Helicase C-terminal domain occupies 436 to 589 (QVDDLLSEAR…QTKYNEEHGI (154 aa)). The region spanning 639 to 674 (QQQIKKLEQQMYKFAQDLEFEKAAAIRDQLHQLREQ) is the UVR domain.

This sequence belongs to the UvrB family. In terms of assembly, forms a heterotetramer with UvrA during the search for lesions. Interacts with UvrC in an incision complex.

It localises to the cytoplasm. Its function is as follows. The UvrABC repair system catalyzes the recognition and processing of DNA lesions. A damage recognition complex composed of 2 UvrA and 2 UvrB subunits scans DNA for abnormalities. Upon binding of the UvrA(2)B(2) complex to a putative damaged site, the DNA wraps around one UvrB monomer. DNA wrap is dependent on ATP binding by UvrB and probably causes local melting of the DNA helix, facilitating insertion of UvrB beta-hairpin between the DNA strands. Then UvrB probes one DNA strand for the presence of a lesion. If a lesion is found the UvrA subunits dissociate and the UvrB-DNA preincision complex is formed. This complex is subsequently bound by UvrC and the second UvrB is released. If no lesion is found, the DNA wraps around the other UvrB subunit that will check the other stand for damage. The sequence is that of UvrABC system protein B from Haemophilus influenzae (strain ATCC 51907 / DSM 11121 / KW20 / Rd).